The primary structure comprises 378 residues: Glutamate 5-kinase (378 aa).

Position 19 (Lys19) interacts with ATP. Substrate contacts are provided by Ser59, Asp146, and Asn158. ATP is bound at residue 178–179 (TD). One can recognise a PUA domain in the interval 285–363 (RGSVTVDPGA…SEFEKLLGYT (79 aa)).

The protein belongs to the glutamate 5-kinase family.

It localises to the cytoplasm. The enzyme catalyses L-glutamate + ATP = L-glutamyl 5-phosphate + ADP. Its pathway is amino-acid biosynthesis; L-proline biosynthesis; L-glutamate 5-semialdehyde from L-glutamate: step 1/2. Functionally, catalyzes the transfer of a phosphate group to glutamate to form L-glutamate 5-phosphate. This is Glutamate 5-kinase from Polaromonas naphthalenivorans (strain CJ2).